Consider the following 896-residue polypeptide: Trehalose-phosphatase (896 aa).

The glycosyltransferase stretch occupies residues 1 to 554 (MTTTAQDNSP…SNDDMERKMT (554 aa)).

In the N-terminal section; belongs to the glycosyltransferase 20 family. This sequence in the C-terminal section; belongs to the trehalose phosphatase family. As to quaternary structure, the trehalose synthase complex is composed of the two catalytic subunits TPS1 and TPS2, and at least one of the two regulatory subunits TPS3 or TSL1. It depends on Mg(2+) as a cofactor.

It is found in the cytoplasm. The enzyme catalyses alpha,alpha-trehalose 6-phosphate + H2O = alpha,alpha-trehalose + phosphate. Its pathway is carbohydrate biosynthesis. With respect to regulation, inhibited by EDTA. Functionally, phosphatase catalytic subunit of the trehalose synthase complex that catalyzes the production of trehalose from glucose-6-phosphate and UDP-alpha-D-glucose in a two step process. This chain is Trehalose-phosphatase, found in Saccharomyces cerevisiae (strain ATCC 204508 / S288c) (Baker's yeast).